A 305-amino-acid polypeptide reads, in one-letter code: Membrane glycoprotein UL142 (305 aa).

A signal peptide spans 1–19 (MRIEWACWLFGYFVSSVGS). Residues 20-270 (ERSLSYRYHL…QKTNNTTSPW (251 aa)) are Lumenal-facing. Residues 271–288 (VYAIPMGATATIGAGLYI) form a helical membrane-spanning segment. Topologically, residues 289–305 (GKHFTPVKFVYEVWRGQ) are cytoplasmic.

As to quaternary structure, interacts with host MICA and ULBP3.

Its subcellular location is the host endoplasmic reticulum membrane. It is found in the host Golgi apparatus membrane. Its function is as follows. Participates in the inhibition of the host immune response. Prevents host NK cell-mediated lysis of the infected cell by preventing the KLRK1 ligand 3/ULBP3 trafficking to the cell surface. Also retains another KLRK1 ligand, MHC class I-related chain A/MICA, in the Golgi apparatus to avoid its surface expression. This chain is Membrane glycoprotein UL142 (UL142), found in Homo sapiens (Human).